The following is a 124-amino-acid chain: MLIKILEEKLMELIQIVGVIFALFALSRVVLQLKRRSISFNEGLFWIFVWGFVVIFLVFPEFFGYVAEVLGVGRGVDALIYISIVVLFYLIYRLYAKINNLERQITHIVREIAIRDRYEPKKRD.

The next 3 membrane-spanning stretches (helical) occupy residues 13–33 (LIQI…VLQL), 43–63 (GLFW…PEFF), and 71–91 (GVGR…FYLI).

It to M.thermoautotrophicum MTH137.

The protein resides in the cell membrane. This is an uncharacterized protein from Methanocaldococcus jannaschii (strain ATCC 43067 / DSM 2661 / JAL-1 / JCM 10045 / NBRC 100440) (Methanococcus jannaschii).